The primary structure comprises 217 residues: 3,4-dihydroxy-2-butanone 4-phosphate synthase (217 aa).

D-ribulose 5-phosphate contacts are provided by residues 37-38 (RE), Asp-42, 150-154 (RGGHT), and Glu-174. Glu-38 is a binding site for Mg(2+). His-153 is a binding site for Mg(2+).

This sequence belongs to the DHBP synthase family. Homodimer. It depends on Mg(2+) as a cofactor. Requires Mn(2+) as cofactor.

It carries out the reaction D-ribulose 5-phosphate = (2S)-2-hydroxy-3-oxobutyl phosphate + formate + H(+). It participates in cofactor biosynthesis; riboflavin biosynthesis; 2-hydroxy-3-oxobutyl phosphate from D-ribulose 5-phosphate: step 1/1. In terms of biological role, catalyzes the conversion of D-ribulose 5-phosphate to formate and 3,4-dihydroxy-2-butanone 4-phosphate. This Escherichia fergusonii (strain ATCC 35469 / DSM 13698 / CCUG 18766 / IAM 14443 / JCM 21226 / LMG 7866 / NBRC 102419 / NCTC 12128 / CDC 0568-73) protein is 3,4-dihydroxy-2-butanone 4-phosphate synthase.